The following is a 269-amino-acid chain: Cytochrome c oxidase subunit 3 (269 aa).

7 helical membrane-spanning segments follow: residues 21-41 (PWPI…GLTM), 45-65 (IVGN…MTMW), 90-110 (GFLL…WAYF), 127-147 (VGIT…ILLA), 167-187 (ALNG…CQYI), 204-224 (VFFA…IMLA), and 247-267 (ILYL…MYWW).

Belongs to the cytochrome c oxidase subunit 3 family. As to quaternary structure, component of the cytochrome c oxidase (complex IV, CIV), a multisubunit enzyme composed of a catalytic core of 3 subunits and several supernumerary subunits. The complex exists as a monomer or a dimer and forms supercomplexes (SCs) in the inner mitochondrial membrane with ubiquinol-cytochrome c oxidoreductase (cytochrome b-c1 complex, complex III, CIII).

The protein resides in the mitochondrion inner membrane. It carries out the reaction 4 Fe(II)-[cytochrome c] + O2 + 8 H(+)(in) = 4 Fe(III)-[cytochrome c] + 2 H2O + 4 H(+)(out). Its function is as follows. Component of the cytochrome c oxidase, the last enzyme in the mitochondrial electron transport chain which drives oxidative phosphorylation. The respiratory chain contains 3 multisubunit complexes succinate dehydrogenase (complex II, CII), ubiquinol-cytochrome c oxidoreductase (cytochrome b-c1 complex, complex III, CIII) and cytochrome c oxidase (complex IV, CIV), that cooperate to transfer electrons derived from NADH and succinate to molecular oxygen, creating an electrochemical gradient over the inner membrane that drives transmembrane transport and the ATP synthase. Cytochrome c oxidase is the component of the respiratory chain that catalyzes the reduction of oxygen to water. Electrons originating from reduced cytochrome c in the intermembrane space (IMS) are transferred via the dinuclear copper A center (CU(A)) of subunit 2 and heme A of subunit 1 to the active site in subunit 1, a binuclear center (BNC) formed by heme A3 and copper B (CU(B)). The BNC reduces molecular oxygen to 2 water molecules using 4 electrons from cytochrome c in the IMS and 4 protons from the mitochondrial matrix. The protein is Cytochrome c oxidase subunit 3 (COX3) of Wickerhamomyces canadensis (Yeast).